Consider the following 477-residue polypeptide: Dihydrolipoyl dehydrogenase (477 aa).

FAD contacts are provided by residues 41–50 (EKRGALGGTC), K59, G124, and 153–155 (TGS). A disulfide bond links C50 and C55. NAD(+) contacts are provided by residues 190 to 197 (GGGVIGLE), E213, V248, and G282. FAD contacts are provided by residues D323 and 330–333 (MLAH). H456 serves as the catalytic Proton acceptor.

It belongs to the class-I pyridine nucleotide-disulfide oxidoreductase family. In terms of assembly, homodimer. The cofactor is FAD.

It catalyses the reaction N(6)-[(R)-dihydrolipoyl]-L-lysyl-[protein] + NAD(+) = N(6)-[(R)-lipoyl]-L-lysyl-[protein] + NADH + H(+). This is Dihydrolipoyl dehydrogenase (LPD) from Trypanosoma cruzi.